The chain runs to 217 residues: Somatotropin (217 aa).

An N-terminal signal peptide occupies residues 1-26 (MATGSHTTTLLLAVALLGLPWPQEAG). His-46 serves as a coordination point for Zn(2+). The cysteines at positions 79 and 190 are disulfide-linked. Glu-199 is a Zn(2+) binding site. Cys-207 and Cys-215 are disulfide-bonded.

Belongs to the somatotropin/prolactin family.

The protein resides in the secreted. Functionally, plays an important role in growth control. Its major role in stimulating body growth is to stimulate the liver and other tissues to secrete IGF1. It stimulates both the differentiation and proliferation of myoblasts. It also stimulates amino acid uptake and protein synthesis in muscle and other tissues. This chain is Somatotropin (GH1), found in Galago senegalensis (Northern lesser bushbaby).